We begin with the raw amino-acid sequence, 744 residues long: Receptor-like serine/threonine-protein kinase ALE2 (744 aa).

A signal peptide spans 1–19 (MRNFAMLLLLILLLHSLAS). Residues 20-260 (FPICFARLFP…SQGIGFRTIA (241 aa)) are Extracellular-facing. Pro residues predominate over residues 59–68 (PAFSPNPSRI). Residues 59 to 79 (PAFSPNPSRIPPLRHKGHHRH) are disordered. Over residues 70-79 (PLRHKGHHRH) the composition is skewed to basic residues. N-linked (GlcNAc...) asparagine glycosylation is found at N87, N186, N204, N243, and N249. The helical transmembrane segment at 261 to 281 (IIALSGFVLILVLVGAISIIV) threads the bilayer. At 282 to 744 (KWKKIGKSSN…HLWSGNGDWL (463 aa)) the chain is on the cytoplasmic side. Residues 349–619 (FSAKRVLGEG…GEVVQALKLI (271 aa)) form the Protein kinase domain. ATP is bound by residues 355–363 (LGEGGFGRV) and K377. The active-site Proton acceptor is D470. Disordered stretches follow at residues 681 to 705 (EDME…PNRS) and 722 to 744 (GSMS…GDWL).

Belongs to the protein kinase superfamily. Ser/Thr protein kinase family. In terms of processing, autophosphorylated and phosphorylated by ACR4.

The protein localises to the cell membrane. The catalysed reaction is L-seryl-[protein] + ATP = O-phospho-L-seryl-[protein] + ADP + H(+). It catalyses the reaction L-threonyl-[protein] + ATP = O-phospho-L-threonyl-[protein] + ADP + H(+). Required during the differentiation of the protoderm into shoots epidermis and cuticle. This Arabidopsis thaliana (Mouse-ear cress) protein is Receptor-like serine/threonine-protein kinase ALE2 (ALE2).